A 105-amino-acid chain; its full sequence is UPF0235 protein Mchl_2407 (105 aa).

This sequence belongs to the UPF0235 family.

The polypeptide is UPF0235 protein Mchl_2407 (Methylorubrum extorquens (strain CM4 / NCIMB 13688) (Methylobacterium extorquens)).